Here is a 484-residue protein sequence, read N- to C-terminus: Vanillin dehydrogenase (484 aa).

Residues 156–157 (WN), 180–183 (KPAS), and 234–235 (GS) contribute to the NADP(+) site. NAD(+) is bound by residues K180 and 234 to 239 (GSTPVG). E258 serves as the catalytic Proton acceptor. L259 provides a ligand contact to NADP(+). Catalysis depends on C292, which acts as the Nucleophile. Residues Q339 and E386 each coordinate NAD(+). E386 contributes to the NADP(+) binding site.

It belongs to the aldehyde dehydrogenase family. Exists as a homodimer, homotrimer and homotetramer.

It catalyses the reaction vanillin + NAD(+) + H2O = vanillate + NADH + 2 H(+). The catalysed reaction is vanillin + NADP(+) + H2O = vanillate + NADPH + 2 H(+). The enzyme catalyses 3,4-dihydroxybenzaldehyde + NAD(+) + H2O = 3,4-dihydroxybenzoate + NADH + 2 H(+). It carries out the reaction 3,4-dihydroxybenzaldehyde + NADP(+) + H2O = 3,4-dihydroxybenzoate + NADPH + 2 H(+). It catalyses the reaction 4-hydroxybenzaldehyde + NAD(+) + H2O = 4-hydroxybenzoate + NADH + 2 H(+). The catalysed reaction is 4-hydroxybenzaldehyde + NADP(+) + H2O = 4-hydroxybenzoate + NADPH + 2 H(+). Functionally, catalyzes oxidation of vanillin to vanillate. Also oxidizes 3,4-dihydroxybenzaldehyde and 4-hydroxybenzaldehyde significantly. Other aromatic aldehyde substrates in the order of decreasing activity include 3-hydroxybenzaldehyde, 4-nitrobenzaldehyde, terephthalaldehyde, 2,4-dichlorobenzaldehyde, benzaldehyde and 3-phenylpropanal. Low activity with phthalaldehyde, cinnamaldehyde and syringaldehyde. No activity with phenylacetaldehyde, formaldehyde or aldehyde. Active with both NAD(+) and NADP(+). Involved in the degradation pathway of lignin-derived aromatic compounds of plant cell walls. Catalyzes the conversion of vanillin to vanillate due to toxicity of vanillin to the cells. This Corynebacterium glutamicum (strain ATCC 13032 / DSM 20300 / JCM 1318 / BCRC 11384 / CCUG 27702 / LMG 3730 / NBRC 12168 / NCIMB 10025 / NRRL B-2784 / 534) protein is Vanillin dehydrogenase.